The chain runs to 358 residues: tRNA-specific 2-thiouridylase MnmA (358 aa).

ATP-binding positions include 6–13 (AMSGGVDS) and Leu-32. Catalysis depends on Cys-101, which acts as the Nucleophile. A disulfide bond links Cys-101 and Cys-193. ATP is bound at residue Gly-125. The interaction with tRNA stretch occupies residues 143 to 145 (KDQ). Cys-193 (cysteine persulfide intermediate) is an active-site residue.

Belongs to the MnmA/TRMU family.

The protein localises to the cytoplasm. The catalysed reaction is S-sulfanyl-L-cysteinyl-[protein] + uridine(34) in tRNA + AH2 + ATP = 2-thiouridine(34) in tRNA + L-cysteinyl-[protein] + A + AMP + diphosphate + H(+). Its function is as follows. Catalyzes the 2-thiolation of uridine at the wobble position (U34) of tRNA, leading to the formation of s(2)U34. This chain is tRNA-specific 2-thiouridylase MnmA, found in Mycobacterium leprae (strain Br4923).